Reading from the N-terminus, the 1375-residue chain is DNA-directed RNA polymerase subunit beta (1375 aa).

Belongs to the RNA polymerase beta chain family. In terms of assembly, the RNAP catalytic core consists of 2 alpha, 1 beta, 1 beta' and 1 omega subunit. When a sigma factor is associated with the core the holoenzyme is formed, which can initiate transcription.

It catalyses the reaction RNA(n) + a ribonucleoside 5'-triphosphate = RNA(n+1) + diphosphate. Its function is as follows. DNA-dependent RNA polymerase catalyzes the transcription of DNA into RNA using the four ribonucleoside triphosphates as substrates. In Coxiella burnetii (strain Dugway 5J108-111), this protein is DNA-directed RNA polymerase subunit beta.